A 364-amino-acid chain; its full sequence is Cobalt-precorrin-5B C(1)-methyltransferase (364 aa).

This sequence belongs to the CbiD family.

It catalyses the reaction Co-precorrin-5B + S-adenosyl-L-methionine = Co-precorrin-6A + S-adenosyl-L-homocysteine. It functions in the pathway cofactor biosynthesis; adenosylcobalamin biosynthesis; cob(II)yrinate a,c-diamide from sirohydrochlorin (anaerobic route): step 6/10. In terms of biological role, catalyzes the methylation of C-1 in cobalt-precorrin-5B to form cobalt-precorrin-6A. The protein is Cobalt-precorrin-5B C(1)-methyltransferase of Pseudomonas putida (strain GB-1).